A 355-amino-acid polypeptide reads, in one-letter code: Anthranilate phosphoribosyltransferase (355 aa).

5-phospho-alpha-D-ribose 1-diphosphate is bound by residues Gly102, Gly105 to Asp106, Ser110, Asn112 to Thr115, Lys130 to Ser138, and Ser142. Gly102 is an anthranilate binding site. Ser114 is a Mg(2+) binding site. Residue Asn133 participates in anthranilate binding. Arg188 provides a ligand contact to anthranilate. Mg(2+) is bound by residues Asp246 and Glu247.

Belongs to the anthranilate phosphoribosyltransferase family. As to quaternary structure, homodimer. Mg(2+) is required as a cofactor.

It carries out the reaction N-(5-phospho-beta-D-ribosyl)anthranilate + diphosphate = 5-phospho-alpha-D-ribose 1-diphosphate + anthranilate. Its pathway is amino-acid biosynthesis; L-tryptophan biosynthesis; L-tryptophan from chorismate: step 2/5. Functionally, catalyzes the transfer of the phosphoribosyl group of 5-phosphorylribose-1-pyrophosphate (PRPP) to anthranilate to yield N-(5'-phosphoribosyl)-anthranilate (PRA). The protein is Anthranilate phosphoribosyltransferase of Pectobacterium atrosepticum (strain SCRI 1043 / ATCC BAA-672) (Erwinia carotovora subsp. atroseptica).